The sequence spans 478 residues: Crt homolog 3 (478 aa).

The disordered stretch occupies residues Met1–Pro30. At Met1 to Thr52 the chain is on the cytoplasmic side. Residues Leu53–Leu73 form a helical membrane-spanning segment. Residues Lys74 to Tyr83 lie on the Vacuolar side of the membrane. The chain crosses the membrane as a helical span at residues Gly84–Trp104. At Tyr105–Lys124 the chain is on the cytoplasmic side. Residues Phe125 to Ser145 traverse the membrane as a helical segment. Residues Thr146–Pro149 are Vacuolar-facing. The helical transmembrane segment at Leu150–Leu170 threads the bilayer. Topologically, residues Arg171 to Gln178 are cytoplasmic. Residues Leu179 to Gly199 form a helical membrane-spanning segment. Over Gly200–Asn205 the chain is Vacuolar. The helical transmembrane segment at Ile206 to Tyr226 threads the bilayer. Residues Lys227–Asp237 are Cytoplasmic-facing. Residues Val238 to Pro258 traverse the membrane as a helical segment. At Val259–Trp322 the chain is on the vacuolar side. Asn296 carries an N-linked (GlcNAc...) asparagine glycan. A helical transmembrane segment spans residues Ile323 to Leu343. Topologically, residues Lys344–Ser352 are cytoplasmic. The chain crosses the membrane as a helical span at residues Ile353 to Gly373. The Vacuolar segment spans residues Ala374–Thr376. Residues Thr377–Tyr397 form a helical membrane-spanning segment. The Cytoplasmic segment spans residues Arg398 to Asn478. Residues Lys404–Gln446 form a disordered region. The segment covering Pro406–Glu415 has biased composition (basic and acidic residues).

This sequence belongs to the CRT-like transporter family.

Its subcellular location is the vacuole membrane. Nutrient transporter. Involved in maintaining the osmotic homeostasis of the digestive vacuole. This is Crt homolog 3 (crtp3) from Dictyostelium discoideum (Social amoeba).